A 160-amino-acid chain; its full sequence is 6,7-dimethyl-8-ribityllumazine synthase (160 aa).

Residues Trp31, 65–67, and 89–91 contribute to the 5-amino-6-(D-ribitylamino)uracil site; these read SFE and CVV. Position 94 to 95 (94 to 95) interacts with (2S)-2-hydroxy-3-oxobutyl phosphate; sequence DT. His97 acts as the Proton donor in catalysis. Phe122 lines the 5-amino-6-(D-ribitylamino)uracil pocket. Arg136 is a binding site for (2S)-2-hydroxy-3-oxobutyl phosphate.

The protein belongs to the DMRL synthase family.

The catalysed reaction is (2S)-2-hydroxy-3-oxobutyl phosphate + 5-amino-6-(D-ribitylamino)uracil = 6,7-dimethyl-8-(1-D-ribityl)lumazine + phosphate + 2 H2O + H(+). It functions in the pathway cofactor biosynthesis; riboflavin biosynthesis; riboflavin from 2-hydroxy-3-oxobutyl phosphate and 5-amino-6-(D-ribitylamino)uracil: step 1/2. Catalyzes the formation of 6,7-dimethyl-8-ribityllumazine by condensation of 5-amino-6-(D-ribitylamino)uracil with 3,4-dihydroxy-2-butanone 4-phosphate. This is the penultimate step in the biosynthesis of riboflavin. The chain is 6,7-dimethyl-8-ribityllumazine synthase from Parabacteroides distasonis (strain ATCC 8503 / DSM 20701 / CIP 104284 / JCM 5825 / NCTC 11152).